A 79-amino-acid polypeptide reads, in one-letter code: uncharacterized protein (79 aa).

This is an uncharacterized protein from Streptomyces lividans.